The primary structure comprises 1801 residues: Focadhesin (1801 aa).

Position 819 is an N6-acetyllysine (K819).

As to quaternary structure, interacts with VCL. As to expression, ubiquitous. High expression in brain followed by testis, muscle, pancreas, heart, ovary, small intestine, placenta, prostate, thymus, kidney, colon, liver, lung, spleen and leukocytes. Expression is reduced in most glioblastomas and all glioblastoma cell lines.

It localises to the cell junction. It is found in the focal adhesion. The protein localises to the cytoplasm. Its subcellular location is the cytosol. Its function is as follows. Required for the maintenance of SKIC2 and SKIC3 proteostatic levels in the liver. May be involved in the regulation of RNA degradation by the exosome complex. Potential tumor suppressor in gliomas. The chain is Focadhesin from Homo sapiens (Human).